Consider the following 491-residue polypeptide: Synaptotagmin-9 (491 aa).

The Vesicular portion of the chain corresponds to 1–52 (MPGARDALCHQALQLLAELCARGALEHDSCQDFIYHLRDRARPRLRDPDISV). The cysteine motif stretch occupies residues 9 to 31 (CHQALQLLAELCARGALEHDSCQ). The chain crosses the membrane as a helical span at residues 53–73 (SLLTLVVTACGLALFGVSLFV). At 74–491 (SWKLCWVPWR…AHWHSLLEKR (418 aa)) the chain is on the cytoplasmic side. Over residues 91–104 (SKDNNQEPLNYTDT) the composition is skewed to polar residues. The tract at residues 91 to 147 (SKDNNQEPLNYTDTETNEQENSEDFLDPPTPCPDSSMKISHTSPDIPLSTQPGGQDN) is disordered. Residues 105-116 (ETNEQENSEDFL) are compositionally biased toward acidic residues. The span at 127–144 (MKISHTSPDIPLSTQPGG) shows a compositional bias: polar residues. Ser-177 is modified (phosphoserine). C2 domains follow at residues 220–341 (ACGK…ILWK) and 352–485 (DLGE…AHWH). Ca(2+) contacts are provided by Asp-251, Asp-257, Asp-309, Phe-310, Asp-311, Ser-314, Asp-317, Asp-383, Asp-389, Asp-443, and Asp-445.

Belongs to the synaptotagmin family. Homodimer; disulfide-linked via the cysteine motif. Can also form heterodimers with SYT3, SYT6, SYT7 and SYT10. The cofactor is Ca(2+).

Its subcellular location is the cytoplasmic vesicle. The protein resides in the secretory vesicle. It localises to the synaptic vesicle membrane. Its function is as follows. May be involved in Ca(2+)-dependent exocytosis of secretory vesicles through Ca(2+) and phospholipid binding to the C2 domain or may serve as Ca(2+) sensors in the process of vesicular trafficking and exocytosis. The protein is Synaptotagmin-9 (Syt9) of Rattus norvegicus (Rat).